Here is a 191-residue protein sequence, read N- to C-terminus: FMN reductase (NADH) RutF (191 aa).

The protein belongs to the non-flavoprotein flavin reductase family. RutF subfamily.

The enzyme catalyses FMNH2 + NAD(+) = FMN + NADH + 2 H(+). Functionally, catalyzes the reduction of FMN to FMNH2 which is used to reduce pyrimidine by RutA via the Rut pathway. This chain is FMN reductase (NADH) RutF, found in Escherichia coli O1:K1 / APEC.